The primary structure comprises 127 residues: Anti-adapter protein IraD (127 aa).

It belongs to the GpW/Gp25 family. IraD subfamily. Interacts with RssB.

It is found in the cytoplasm. Functionally, inhibits RpoS proteolysis by regulating RssB activity, thereby increasing the stability of the sigma stress factor RpoS during oxidative stress. Its effect on RpoS stability is due to its interaction with RssB, which probably blocks the interaction of RssB with RpoS, and the consequent delivery of the RssB-RpoS complex to the ClpXP protein degradation pathway. The sequence is that of Anti-adapter protein IraD from Escherichia coli O6:K15:H31 (strain 536 / UPEC).